The sequence spans 194 residues: Glycerol-3-phosphate acyltransferase (194 aa).

A run of 6 helical transmembrane segments spans residues 2 to 22, 52 to 72, 80 to 100, 112 to 132, 137 to 157, and 161 to 181; these read AFFC…GVWI, LGVA…YIAS, DLVI…FISF, VFLF…ILVA, YVSL…FFTH, and YLFA…KTNI.

It belongs to the PlsY family. Probably interacts with PlsX.

The protein localises to the cell inner membrane. The enzyme catalyses an acyl phosphate + sn-glycerol 3-phosphate = a 1-acyl-sn-glycero-3-phosphate + phosphate. It participates in lipid metabolism; phospholipid metabolism. Its function is as follows. Catalyzes the transfer of an acyl group from acyl-phosphate (acyl-PO(4)) to glycerol-3-phosphate (G3P) to form lysophosphatidic acid (LPA). This enzyme utilizes acyl-phosphate as fatty acyl donor, but not acyl-CoA or acyl-ACP. The sequence is that of Glycerol-3-phosphate acyltransferase from Fusobacterium nucleatum subsp. nucleatum (strain ATCC 25586 / DSM 15643 / BCRC 10681 / CIP 101130 / JCM 8532 / KCTC 2640 / LMG 13131 / VPI 4355).